A 211-amino-acid chain; its full sequence is Uracil phosphoribosyltransferase (211 aa).

5-phospho-alpha-D-ribose 1-diphosphate is bound by residues Arg77, Arg102, and 129-137 (DPMLATGGS). Residues Ile192 and 197-199 (GDA) each bind uracil. Asp198 serves as a coordination point for 5-phospho-alpha-D-ribose 1-diphosphate.

Belongs to the UPRTase family. Mg(2+) serves as cofactor.

It catalyses the reaction UMP + diphosphate = 5-phospho-alpha-D-ribose 1-diphosphate + uracil. Its pathway is pyrimidine metabolism; UMP biosynthesis via salvage pathway; UMP from uracil: step 1/1. Allosterically activated by GTP. In terms of biological role, catalyzes the conversion of uracil and 5-phospho-alpha-D-ribose 1-diphosphate (PRPP) to UMP and diphosphate. In Corynebacterium glutamicum (strain R), this protein is Uracil phosphoribosyltransferase.